We begin with the raw amino-acid sequence, 119 residues long: Large ribosomal subunit protein uL22 (119 aa).

Belongs to the universal ribosomal protein uL22 family. As to quaternary structure, part of the 50S ribosomal subunit.

Functionally, this protein binds specifically to 23S rRNA; its binding is stimulated by other ribosomal proteins, e.g. L4, L17, and L20. It is important during the early stages of 50S assembly. It makes multiple contacts with different domains of the 23S rRNA in the assembled 50S subunit and ribosome. Its function is as follows. The globular domain of the protein is located near the polypeptide exit tunnel on the outside of the subunit, while an extended beta-hairpin is found that lines the wall of the exit tunnel in the center of the 70S ribosome. In Rickettsia canadensis (strain McKiel), this protein is Large ribosomal subunit protein uL22.